The primary structure comprises 1188 residues: DNA-directed RNA polymerase subunit beta (1188 aa).

It belongs to the RNA polymerase beta chain family. As to quaternary structure, the RNAP catalytic core consists of 2 alpha, 1 beta, 1 beta' and 1 omega subunit. When a sigma factor is associated with the core the holoenzyme is formed, which can initiate transcription.

It carries out the reaction RNA(n) + a ribonucleoside 5'-triphosphate = RNA(n+1) + diphosphate. Its function is as follows. DNA-dependent RNA polymerase catalyzes the transcription of DNA into RNA using the four ribonucleoside triphosphates as substrates. This chain is DNA-directed RNA polymerase subunit beta, found in Streptococcus pyogenes serotype M1.